The chain runs to 78 residues: Large ribosomal subunit protein bL28 (78 aa).

Positions 1 to 20 (MSRVCQVTGKGPVTGNNISH) are disordered.

Belongs to the bacterial ribosomal protein bL28 family.

The sequence is that of Large ribosomal subunit protein bL28 from Azotobacter vinelandii (strain DJ / ATCC BAA-1303).